The sequence spans 477 residues: ETS translocation variant 1 (477 aa).

Phosphoserine is present on S94. Residues 128–179 (PQVGMRPSNPPTPSSTPVSPLHHASPNSTHTPKPDRAFPAHLPPSQSIPDSS) are disordered. Phosphoserine; by RPS6KA1 and RPS6KA5 is present on residues S191 and S216. Residue K317 forms a Glycyl lysine isopeptide (Lys-Gly) (interchain with G-Cter in SUMO2) linkage. The segment at residues 335-415 (LQLWQFLVAL…AGERYVYKFV (81 aa)) is a DNA-binding region (ETS).

Belongs to the ETS family. In terms of processing, sumoylated. Post-translationally, phosphorylated at Ser-191 and Ser-216 by RPS6KA1 and RPS6KA5; phosphorylation activates transcriptional activity. As to expression, very highly expressed in brain, highly expressed in testis, lung and heart, moderately in spleen, small intestine, pancreas and colon, weakly in liver, prostate and thymus, very weakly in skeletal muscle, kidney and ovary and not in placenta and peripheral blood leukocytes.

It is found in the nucleus. Its function is as follows. Transcriptional activator that binds to DNA sequences containing the consensus pentanucleotide 5'-CGGA[AT]-3'. Required for olfactory dopaminergic neuron differentiation; may directly activate expression of tyrosine hydroxylase (TH). The sequence is that of ETS translocation variant 1 from Homo sapiens (Human).